A 1274-amino-acid chain; its full sequence is MSGSCAAPGPGSGSSPAACRFAHYFVLCGIDADSGLEPDELAGENFDQSPLRRTFKSKVLAHYPQNIEWNPFDQDAVNMLCMPKGLSFRTQTDNKDPQFHSFIITREDGSRTYGFVLTFYEEVTSKQICTAMQTLYQMHNAEHYSSVYASSSCSMDSLASSLDEGDTTSLLKLQRYNSYDISRDTLYVSKSICLITPLPFMQACKKFLIQLYKAVTSQQPPPLPLESYIHNILYEVPLPPPGRSLKFYGVYEPVICQRPGPSELPLSDYPLREAFELLGLENLVQVFTCVLLEMQILLYSQDYQRLMTVAEGITTLLFPFQWQHVYVPILPASLLHFLDAPVPYLMGLQSKEGTDRSKLELPQEANLCFVDIDNHFIELPEEFPQFPNKVDFIQELSEVLVQFGIPPEGSLHCSESTSKLKNMVLKDLVNDKKNGNVCTNNISMYELLKGNETIARLQALAKRTGVAVEKMDLSASLGEKDKDLKLHCEEAELRDYQLNVQLREVFANRFTQMFADYEAFVIQTAQDMESWLTNREQMQNFDKASFLSDQPEPYLPFLSRFIETQMFATFIDNKIMSQWEEKDPLLRVFDTRIDKIRLYNVRAPTLRTSIYQKCSTLKEAAQSIEQRLMKMDHTAIHPHLLDMKIGQGKYEQGFFPKLQSDVLATGPTSNNRWVSRSATAQRRKERLRQHSEHVGLDNDLREKYMQEARSLGKNLRQPKLSDLSPAVIAQTNCKFVEGLLKECRMKTKRMLVEKMGHEAVELGHGEANITGLEENTLIASLCDLLERIWSHGLQVKQGKSALWSHLIQFQDREEKQEHLAESPVALGPERRKSDSGVMLPTLRVSLIQDMRHIQNMSEIKTDVGRARAWIRLSLEKKLLSQHLKQLLSNQPLTKKLYKRYAFLRCEEEREQFLYHLLSLNAVDYFCFTSVFTTIMIPYRSVIIPIKKLSNAIITSNPWICVSGELGDTGVMQIPKNLLEMTFECQNLGKLTTVQIGHDNSGLLAKWLVDCVMVRNEITGHTYRFPCGRWLGKGIDDGSLERILIGELMTSASDEDLVKQCRTPPQQKSPTTARRLSITSLTGKNNKPNAGQIQEGIGEAVNNIVKHFHKPEKERGSLTVLLCGENGLVAALEQVFHHGFKSARIFHKNVFIWDFIEKVVAYFETTDQILDNEDDVLIQKSSCKTFCHYVNAINTAPRNIGKDGKFQILVCLGTRDRLLPQWIPLLAECPAITRMYEESALLRDRMTVNSLIRILQTIQDFTIVLEGSLIKGVDV.

At S2 the chain carries N-acetylserine. A uDENN domain is found at 39–244 (DELAGENFDQ…EVPLPPPGRS (206 aa)). A phosphoserine mark is found at S49 and S178. The 137-residue stretch at 263–399 (ELPLSDYPLR…VDFIQELSEV (137 aa)) folds into the cDENN domain. Residues 401-581 (VQFGIPPEGS…DNKIMSQWEE (181 aa)) form the dDENN domain. The 161-residue stretch at 772 to 932 (LEENTLIASL…DYFCFTSVFT (161 aa)) folds into the RUN 1 domain. S822 is modified (phosphoserine). The chain crosses the membrane as a helical span at residues 916–936 (LLSLNAVDYFCFTSVFTTIMI). Residues 936-1044 (IPYRSVIIPI…DDGSLERILI (109 aa)) enclose the PLAT domain. Residue T1062 is modified to Phosphothreonine. Phosphoserine occurs at positions 1068, 1076, and 1079. An RUN 2 domain is found at 1118-1267 (TVLLCGENGL…QDFTIVLEGS (150 aa)).

Belongs to the RAB6IP1 family.

Its subcellular location is the membrane. Guanine nucleotide exchange factor (GEF) which may activate RAB39A and/or RAB39B. Promotes the exchange of GDP to GTP, converting inactive GDP-bound Rab proteins into their active GTP-bound form. In Homo sapiens (Human), this protein is DENN domain-containing protein 5B (DENND5B).